A 40-amino-acid polypeptide reads, in one-letter code: Submaxillary gland androgen-regulated protein 2, isoform epsilon (40 aa).

An N-terminal signal peptide occupies residues 1–20 (MKALYMVFVLWVLIGCFLRC).

It localises to the secreted. In terms of biological role, may play a role in protection or detoxification. The polypeptide is Submaxillary gland androgen-regulated protein 2, isoform epsilon (Smr2) (Mus musculus (Mouse)).